The following is a 237-amino-acid chain: tRNA (guanine-N(7)-)-methyltransferase (237 aa).

S-adenosyl-L-methionine-binding residues include aspartate 35, glutamate 60, asparagine 87, and aspartate 113. Residue aspartate 113 is part of the active site. Residues lysine 117 and aspartate 149 each contribute to the substrate site.

This sequence belongs to the class I-like SAM-binding methyltransferase superfamily. TrmB family.

The catalysed reaction is guanosine(46) in tRNA + S-adenosyl-L-methionine = N(7)-methylguanosine(46) in tRNA + S-adenosyl-L-homocysteine. It participates in tRNA modification; N(7)-methylguanine-tRNA biosynthesis. Functionally, catalyzes the formation of N(7)-methylguanine at position 46 (m7G46) in tRNA. The chain is tRNA (guanine-N(7)-)-methyltransferase from Synechococcus sp. (strain CC9311).